The chain runs to 777 residues: ATPase ARSA1 (777 aa).

Residue 110 to 117 (KGGVGKTS) coordinates ATP. Asp-139 is a catalytic residue. ATP is bound by residues Asn-372 and 454-461 (KGGVGKTS). Residue Asp-483 is part of the active site. An ATP-binding site is contributed by Asn-712.

Belongs to the arsA ATPase family. Monomer. Interacts with TOC34.

Its subcellular location is the cytoplasm. It localises to the cytosol. In terms of biological role, ATPase required for the post-translational delivery of tail-anchored (TA) proteins to the chloroplast. Required for the accumulation of TOC34, an essential component of the outer chloroplast membrane translocon (TOC) complex. Recognizes and selectively binds the transmembrane domain of TA proteins in the cytosol. This complex then targets to chloroplast, where the tail-anchored protein is released for insertion. This process is regulated by ATP binding and hydrolysis. The protein is ATPase ARSA1 of Chlamydomonas reinhardtii (Chlamydomonas smithii).